A 490-amino-acid chain; its full sequence is Alpha-galactosidase (490 aa).

4–70 (FKIAIIGAGS…LPTRVTATTD (67 aa)) is a binding site for NAD(+). N150 is a substrate binding site. Mn(2+) is bound at residue C171. The Proton donor role is filled by H172. A Mn(2+)-binding site is contributed by H201. Y258 (proton acceptor) is an active-site residue.

The protein belongs to the glycosyl hydrolase 4 family. In terms of assembly, homodimer. Mn(2+) is required as a cofactor. It depends on NAD(+) as a cofactor.

It catalyses the reaction Hydrolysis of terminal, non-reducing alpha-D-galactose residues in alpha-D-galactosides, including galactose oligosaccharides, galactomannans and galactolipids.. This is Alpha-galactosidase (melA) from Rhizobium meliloti (strain 1021) (Ensifer meliloti).